The following is a 364-amino-acid chain: Tyrosine--tRNA ligase (364 aa).

Tyr39 contributes to the L-tyrosine binding site. Residues His49 and Trp52 each coordinate ATP. L-tyrosine is bound by residues Tyr165, Gln169, Asp172, and Gln187. The short motif at 238–242 (KMSKS) is the 'KMSKS' region element. Lys241 is a binding site for ATP.

It belongs to the class-I aminoacyl-tRNA synthetase family. TyrS type 4 subfamily. Homodimer.

The protein resides in the cytoplasm. The enzyme catalyses tRNA(Tyr) + L-tyrosine + ATP = L-tyrosyl-tRNA(Tyr) + AMP + diphosphate + H(+). In terms of biological role, catalyzes the attachment of tyrosine to tRNA(Tyr) in a two-step reaction: tyrosine is first activated by ATP to form Tyr-AMP and then transferred to the acceptor end of tRNA(Tyr). This is Tyrosine--tRNA ligase from Aeropyrum pernix (strain ATCC 700893 / DSM 11879 / JCM 9820 / NBRC 100138 / K1).